Here is a 537-residue protein sequence, read N- to C-terminus: Protoporphyrinogen oxidase 1, chloroplastic (537 aa).

A chloroplast-targeting transit peptide spans 1–34; the sequence is MELSLLRPTTQSLLPSFSKPNLRLNVYKPLRLRC. An N-acetylserine modification is found at S35. FAD is bound by residues 63-68, 90-91, and 112-115; these read GGGISG, EA, and GPNS. Over residues 256–268 the composition is skewed to basic and acidic residues; it reads RKNAPKAERDPRL. Residues 256–275 are disordered; it reads RKNAPKAERDPRLPKPQGQT. FAD is bound at residue 511–513; the sequence is VAL.

Belongs to the protoporphyrinogen/coproporphyrinogen oxidase family. Protoporphyrinogen oxidase subfamily. FAD serves as cofactor. In terms of tissue distribution, expressed at high levels in the leaves and at low levels in the roots and floral buds.

The protein resides in the plastid. Its subcellular location is the chloroplast. It carries out the reaction protoporphyrinogen IX + 3 O2 = protoporphyrin IX + 3 H2O2. The protein operates within porphyrin-containing compound metabolism; protoporphyrin-IX biosynthesis; protoporphyrin-IX from protoporphyrinogen-IX: step 1/1. It functions in the pathway porphyrin-containing compound metabolism; chlorophyll biosynthesis. With respect to regulation, inhibited by acifluorfen. Its function is as follows. Catalyzes the 6-electron oxidation of protoporphyrinogen-IX to form protoporphyrin-IX. This chain is Protoporphyrinogen oxidase 1, chloroplastic (PPOX1), found in Arabidopsis thaliana (Mouse-ear cress).